A 201-amino-acid polypeptide reads, in one-letter code: 3-isopropylmalate dehydratase small subunit (201 aa).

It belongs to the LeuD family. LeuD type 1 subfamily. As to quaternary structure, heterodimer of LeuC and LeuD.

The enzyme catalyses (2R,3S)-3-isopropylmalate = (2S)-2-isopropylmalate. It participates in amino-acid biosynthesis; L-leucine biosynthesis; L-leucine from 3-methyl-2-oxobutanoate: step 2/4. Functionally, catalyzes the isomerization between 2-isopropylmalate and 3-isopropylmalate, via the formation of 2-isopropylmaleate. The sequence is that of 3-isopropylmalate dehydratase small subunit from Escherichia fergusonii (strain ATCC 35469 / DSM 13698 / CCUG 18766 / IAM 14443 / JCM 21226 / LMG 7866 / NBRC 102419 / NCTC 12128 / CDC 0568-73).